We begin with the raw amino-acid sequence, 201 residues long: L(+)-tartrate dehydratase subunit beta (201 aa).

The active site involves histidine 37.

This sequence belongs to the class-I fumarase family. In terms of assembly, heterotetramer of two alpha and two beta subunits.

It carries out the reaction (2R,3R)-tartrate = oxaloacetate + H2O. The polypeptide is L(+)-tartrate dehydratase subunit beta (ttdB) (Escherichia coli O6:K15:H31 (strain 536 / UPEC)).